The chain runs to 296 residues: 4-hydroxy-tetrahydrodipicolinate synthase (296 aa).

Pyruvate is bound at residue T49. The active-site Proton donor/acceptor is the Y137. The Schiff-base intermediate with substrate role is filled by K165. Position 207 (I207) interacts with pyruvate.

Belongs to the DapA family. As to quaternary structure, homotetramer; dimer of dimers.

Its subcellular location is the cytoplasm. The enzyme catalyses L-aspartate 4-semialdehyde + pyruvate = (2S,4S)-4-hydroxy-2,3,4,5-tetrahydrodipicolinate + H2O + H(+). The protein operates within amino-acid biosynthesis; L-lysine biosynthesis via DAP pathway; (S)-tetrahydrodipicolinate from L-aspartate: step 3/4. In terms of biological role, catalyzes the condensation of (S)-aspartate-beta-semialdehyde [(S)-ASA] and pyruvate to 4-hydroxy-tetrahydrodipicolinate (HTPA). This Afipia carboxidovorans (strain ATCC 49405 / DSM 1227 / KCTC 32145 / OM5) (Oligotropha carboxidovorans) protein is 4-hydroxy-tetrahydrodipicolinate synthase.